We begin with the raw amino-acid sequence, 172 residues long: Adenine phosphoribosyltransferase (172 aa).

This sequence belongs to the purine/pyrimidine phosphoribosyltransferase family. Homodimer.

It is found in the cytoplasm. It carries out the reaction AMP + diphosphate = 5-phospho-alpha-D-ribose 1-diphosphate + adenine. Its pathway is purine metabolism; AMP biosynthesis via salvage pathway; AMP from adenine: step 1/1. Functionally, catalyzes a salvage reaction resulting in the formation of AMP, that is energically less costly than de novo synthesis. The polypeptide is Adenine phosphoribosyltransferase (Methanococcus maripaludis (strain C7 / ATCC BAA-1331)).